An 800-amino-acid polypeptide reads, in one-letter code: uncharacterized protein (800 aa).

An N-terminal signal peptide occupies residues M1–A21. The segment covering S63–I72 has biased composition (polar residues). Disordered regions lie at residues S63–T470, T602–S670, and S710–S776. Composition is skewed to low complexity over residues T73–S314, S321–S368, S375–P444, and T451–T470. Residues S710–T720 show a composition bias toward low complexity. Residues E721–K734 are compositionally biased toward polar residues. The span at T735–S776 shows a compositional bias: low complexity.

It is found in the secreted. It localises to the cell surface. This is an uncharacterized protein from Schizosaccharomyces pombe (strain 972 / ATCC 24843) (Fission yeast).